We begin with the raw amino-acid sequence, 150 residues long: UPF0756 membrane protein PM0771 (150 aa).

Helical transmembrane passes span 12 to 34 (LVVL…AAIL), 52 to 72 (HGIT…IVSG), 79 to 99 (LAVF…LVAW), and 123 to 143 (ILGV…AGIL).

It belongs to the UPF0756 family.

Its subcellular location is the cell membrane. The sequence is that of UPF0756 membrane protein PM0771 from Pasteurella multocida (strain Pm70).